A 452-amino-acid chain; its full sequence is UDP-N-acetylmuramoylalanine--D-glutamate ligase (452 aa).

119–125 (GSNGKTT) provides a ligand contact to ATP.

The protein belongs to the MurCDEF family.

The protein resides in the cytoplasm. The enzyme catalyses UDP-N-acetyl-alpha-D-muramoyl-L-alanine + D-glutamate + ATP = UDP-N-acetyl-alpha-D-muramoyl-L-alanyl-D-glutamate + ADP + phosphate + H(+). Its pathway is cell wall biogenesis; peptidoglycan biosynthesis. Functionally, cell wall formation. Catalyzes the addition of glutamate to the nucleotide precursor UDP-N-acetylmuramoyl-L-alanine (UMA). The sequence is that of UDP-N-acetylmuramoylalanine--D-glutamate ligase from Streptococcus pyogenes serotype M5 (strain Manfredo).